A 101-amino-acid chain; its full sequence is DNA-binding protein TubR (101 aa).

In terms of assembly, homodimer. Dimers bind to DNA, forming a protein-bound filament which may form a helix around the TubZ filament.

A DNA-binding protein that is part of the type III plasmid partition system used to ensure correct segregation of the pBM400 plasmid. Binds the plasmid origin of replication, probably cooperatively, forming a ring or short helix with external DNA. Its effect on RNA expression has not been shown. In Priestia megaterium (strain ATCC 12872 / QMB1551) (Bacillus megaterium), this protein is DNA-binding protein TubR.